The chain runs to 477 residues: Cysteine--tRNA ligase (477 aa).

Cys29 lines the Zn(2+) pocket. The 'HIGH' region signature appears at 31–41 (PTVYDFAHIGN). 3 residues coordinate Zn(2+): Cys224, His249, and Glu253. A 'KMSKS' region motif is present at residues 282–286 (KMSKS). Lys285 is a binding site for ATP.

The protein belongs to the class-I aminoacyl-tRNA synthetase family. As to quaternary structure, monomer. Requires Zn(2+) as cofactor.

The protein localises to the cytoplasm. The enzyme catalyses tRNA(Cys) + L-cysteine + ATP = L-cysteinyl-tRNA(Cys) + AMP + diphosphate. The protein is Cysteine--tRNA ligase of Nitrobacter winogradskyi (strain ATCC 25391 / DSM 10237 / CIP 104748 / NCIMB 11846 / Nb-255).